Here is an 836-residue protein sequence, read N- to C-terminus: Phenylalanine--tRNA ligase beta subunit (836 aa).

Positions 44 to 160 (PETTGPLVIG…EIAEPGTDAR (117 aa)) constitute a tRNA-binding domain. A B5 domain is found at 420–495 (PSMPQIRMKT…RLEGLEDIPT (76 aa)). Positions 473, 479, 482, and 483 each coordinate Mg(2+). The 94-residue stretch at 742 to 835 (SAFPVLHQDL…AAELFGATMR (94 aa)) folds into the FDX-ACB domain.

The protein belongs to the phenylalanyl-tRNA synthetase beta subunit family. Type 1 subfamily. As to quaternary structure, tetramer of two alpha and two beta subunits. The cofactor is Mg(2+).

It is found in the cytoplasm. It catalyses the reaction tRNA(Phe) + L-phenylalanine + ATP = L-phenylalanyl-tRNA(Phe) + AMP + diphosphate + H(+). The polypeptide is Phenylalanine--tRNA ligase beta subunit (Corynebacterium diphtheriae (strain ATCC 700971 / NCTC 13129 / Biotype gravis)).